Reading from the N-terminus, the 64-residue chain is U-poneritoxin(01)-Om1a (64 aa).

An N-terminal signal peptide occupies residues 1–27 (MKPSGLTFAFLVVFMMAIMYNSVQVTA). Positions 28 to 45 (DADADAEAEALANALAEA) are excised as a propeptide. Methionine amide is present on M62.

In terms of processing, truncated sequences of this peptide have also been found in the venom. It is possible they have been cleaved in the venom. Expressed by the venom gland.

It localises to the secreted. Its function is as follows. Antimicrobial peptide with activities against E.coli (MIC=1.3 uM), S.aureus (MIC=3.1 uM), and S.cerevisiae (MIC=50 uM). Also shows histamine-releasing activity (32.9% at 10 uM). Does not show hemolytic activity, even at 50 uM. It is a short peptide for which no alpha-helical region has been predicted. In Odontomachus monticola (Trap-jaw ant), this protein is U-poneritoxin(01)-Om1a.